The chain runs to 262 residues: Acetylglutamate kinase (262 aa).

Substrate contacts are provided by residues 46 to 47 (GG), Arg-68, and Asn-160.

It belongs to the acetylglutamate kinase family. ArgB subfamily.

It is found in the cytoplasm. The catalysed reaction is N-acetyl-L-glutamate + ATP = N-acetyl-L-glutamyl 5-phosphate + ADP. Its pathway is amino-acid biosynthesis; L-arginine biosynthesis; N(2)-acetyl-L-ornithine from L-glutamate: step 2/4. Functionally, catalyzes the ATP-dependent phosphorylation of N-acetyl-L-glutamate. This is Acetylglutamate kinase from Shewanella amazonensis (strain ATCC BAA-1098 / SB2B).